The primary structure comprises 134 residues: UPF0357 protein AAL017W (134 aa).

The signal sequence occupies residues 1 to 23 (MFGLISLWHLFWLAVMAGILVVA).

This sequence belongs to the UPF0357 family.

The chain is UPF0357 protein AAL017W from Eremothecium gossypii (strain ATCC 10895 / CBS 109.51 / FGSC 9923 / NRRL Y-1056) (Yeast).